Consider the following 289-residue polypeptide: Tachykinins (289 aa).

Positions 1–24 (MRSQGGSFAVALLLLLLLTAAATA) are cleaved as a signal peptide. Residues 25 to 49 (ADAEPDVESSVSTLPPGADAPRRMV) constitute a propeptide that is removed on maturation. The interval 28 to 80 (EPDVESSVSTLPPGADAPRRMVKRAPTSSFIGMRGKKEDEKDQRAADWMGPDP) is disordered. Position 61 is an arginine amide (R61). A compositionally biased stretch (basic and acidic residues) spans 62–72 (GKKEDEKDQRA). N95 is subject to Asparagine amide. R110 bears the Arginine amide mark. The residue at position 155 (V155) is a Valine amide. Residues 156 to 175 (GKRAPTGFTGMRGKRPMSGD) are disordered. 4 positions are modified to arginine amide: R167, R198, R237, and R281. The propeptide occupies 285-289 (PALAE).

It belongs to the tachykinin family.

Its subcellular location is the secreted. Its function is as follows. Tachykinins are active peptides which excite neurons, evoke behavioral responses, are potent vasodilators and secretagogues, and contract (directly or indirectly) many smooth muscles. Stimulates gut muscle contractions. The sequence is that of Tachykinins from Drosophila pseudoobscura pseudoobscura (Fruit fly).